We begin with the raw amino-acid sequence, 470 residues long: UDP-N-acetylmuramate--L-alanine ligase (470 aa).

Residue 114-120 (GTHGKTT) coordinates ATP.

Belongs to the MurCDEF family.

The protein localises to the cytoplasm. It catalyses the reaction UDP-N-acetyl-alpha-D-muramate + L-alanine + ATP = UDP-N-acetyl-alpha-D-muramoyl-L-alanine + ADP + phosphate + H(+). It functions in the pathway cell wall biogenesis; peptidoglycan biosynthesis. Cell wall formation. The chain is UDP-N-acetylmuramate--L-alanine ligase from Xanthobacter autotrophicus (strain ATCC BAA-1158 / Py2).